Reading from the N-terminus, the 439-residue chain is Exosome complex component RRP45 (439 aa).

Positions 1-268 (MKETPLSNCE…AEITELILKA (268 aa)) are ARE binding. Phosphoserine is present on Ser65. Residue Lys297 is modified to N6-acetyllysine; alternate. Lys297 participates in a covalent cross-link: Glycyl lysine isopeptide (Lys-Gly) (interchain with G-Cter in SUMO1); alternate. Residue Lys297 forms a Glycyl lysine isopeptide (Lys-Gly) (interchain with G-Cter in SUMO2); alternate linkage. 4 positions are modified to phosphoserine: Ser306, Val325, Ser327, and Ser346. 2 disordered regions span residues 335–363 (GTAQIGEGVENSWGDLEDSEKEDDEGGGD) and 391–439 (LSDS…RAAN). A compositionally biased stretch (acidic residues) spans 349 to 361 (DLEDSEKEDDEGG). Ser392, Ser394, Lys409, and Ile411 each carry phosphoserine. Lys419 participates in a covalent cross-link: Glycyl lysine isopeptide (Lys-Gly) (interchain with G-Cter in SUMO2). Over residues 425 to 439 (SKKPVKRRKKKRAAN) the composition is skewed to basic residues.

This sequence belongs to the RNase PH family. Component of the RNA exosome core complex (Exo-9), composed of EXOSC1, EXOSC2, EXOSC3, EXOSC4, EXOSC5, EXOSC6, EXOSC7, EXOSC8 and EXOSC9; within the complex interacts with EXOSC3, EXOSC4, EXOSC5 and DIS3. The catalytically inactive RNA exosome core complex (Exo-9) associates with the catalytic subunit EXOSC10/RRP6. Exo-9 may associate with DIS3 to form the nucleolar exosome complex, or DIS3L to form the cytoplasmic exosome complex. Exo-9 is formed by a hexameric base ring consisting of the heterodimers EXOSC4-EXOSC9, EXOSC5-EXOSC8 and EXOSC6-EXOSC7, and a cap ring consisting of EXOSC1, EXOSC2 and EXOSC3. The RNA exosome complex associates with cofactors C1D/RRP47, MPHOSPH6/MPP6 and MTREX/MTR4. Interacts (via C-terminus region) with SETX (via N-terminus domain); the interaction enhances SETX sumoylation. Interacts with DIS3; the interaction is direct.

The protein localises to the cytoplasm. It localises to the nucleus. The protein resides in the nucleolus. Its subcellular location is the nucleoplasm. Functionally, non-catalytic component of the RNA exosome complex which has 3'-&gt;5' exoribonuclease activity and participates in a multitude of cellular RNA processing and degradation events. In the nucleus, the RNA exosome complex is involved in proper maturation of stable RNA species such as rRNA, snRNA and snoRNA, in the elimination of RNA processing by-products and non-coding 'pervasive' transcripts, such as antisense RNA species and promoter-upstream transcripts (PROMPTs), and of mRNAs with processing defects, thereby limiting or excluding their export to the cytoplasm. The RNA exosome may be involved in Ig class switch recombination (CSR) and/or Ig variable region somatic hypermutation (SHM) by targeting AICDA deamination activity to transcribed dsDNA substrates. In the cytoplasm, the RNA exosome complex is involved in general mRNA turnover and specifically degrades inherently unstable mRNAs containing AU-rich elements (AREs) within their 3' untranslated regions, and in RNA surveillance pathways, preventing translation of aberrant mRNAs. It seems to be involved in degradation of histone mRNA. The catalytic inactive RNA exosome core complex of 9 subunits (Exo-9) is proposed to play a pivotal role in the binding and presentation of RNA for ribonucleolysis, and to serve as a scaffold for the association with catalytic subunits and accessory proteins or complexes. EXOSC9 binds to ARE-containing RNAs. The sequence is that of Exosome complex component RRP45 (EXOSC9) from Homo sapiens (Human).